A 291-amino-acid polypeptide reads, in one-letter code: 4-hydroxy-tetrahydrodipicolinate synthase (291 aa).

A pyruvate-binding site is contributed by threonine 45. Tyrosine 133 serves as the catalytic Proton donor/acceptor. Catalysis depends on lysine 161, which acts as the Schiff-base intermediate with substrate. Isoleucine 203 lines the pyruvate pocket.

The protein belongs to the DapA family. Homotetramer.

Its subcellular location is the cytoplasm. The enzyme catalyses L-aspartate 4-semialdehyde + pyruvate = (2S,4S)-4-hydroxy-2,3,4,5-tetrahydrodipicolinate + H2O + H(+). The protein operates within amino-acid biosynthesis; L-lysine biosynthesis via DAP pathway; (S)-tetrahydrodipicolinate from L-aspartate: step 3/4. With respect to regulation, is allosterically feedback inhibited by lysine; the N.meningitidis enzyme is significantly more sensitive to lysine than the E.coli enzyme. Shows substrate inhibition by (S)-ASA, with a Ki of 1.7 mM. Catalyzes the condensation of (S)-aspartate-beta-semialdehyde [(S)-ASA] and pyruvate to 4-hydroxy-tetrahydrodipicolinate (HTPA). This is 4-hydroxy-tetrahydrodipicolinate synthase from Neisseria meningitidis serogroup B (strain ATCC BAA-335 / MC58).